A 267-amino-acid polypeptide reads, in one-letter code: 5'-nucleotidase SurE (267 aa).

4 residues coordinate a divalent metal cation: aspartate 14, aspartate 15, serine 45, and asparagine 100.

This sequence belongs to the SurE nucleotidase family. It depends on a divalent metal cation as a cofactor.

Its subcellular location is the cytoplasm. It carries out the reaction a ribonucleoside 5'-phosphate + H2O = a ribonucleoside + phosphate. In terms of biological role, nucleotidase that shows phosphatase activity on nucleoside 5'-monophosphates. This chain is 5'-nucleotidase SurE, found in Methanosarcina acetivorans (strain ATCC 35395 / DSM 2834 / JCM 12185 / C2A).